A 338-amino-acid polypeptide reads, in one-letter code: Bacteriochlorophyllide d C-20 methyltransferase (338 aa).

Residue Glu-147 coordinates S-adenosyl-L-methionine. Substrate is bound at residue His-150. S-adenosyl-L-methionine-binding positions include Gly-177, Asn-200, 227–228 (DI), and 242–243 (CR). The active-site Nucleophile is Tyr-246. Residue His-290 coordinates a bacteriochlorophyll d.

It belongs to the class I-like SAM-binding methyltransferase superfamily. Cation-independent O-methyltransferase family. Homodimer.

The catalysed reaction is a bacteriochlorophyllide d + S-adenosyl-L-methionine = a bacteriochlorophyllide c + S-adenosyl-L-homocysteine + H(+). It participates in porphyrin-containing compound metabolism; bacteriochlorophyll biosynthesis (light-independent). Involved in the biosynthesis of the major light-harvesting pigment bacteriochlorophyll c (BChlc), which confers a significant competitive advantage to green sulfur bacteria living at limiting red and near-infrared light intensities. Catalyzes the methylation at the C-20 position of the cyclic tetrapyrrole chlorin of bacteriochlorophyll d (BChld) to produce bacteriochlorophyll c (BChlc) using S-adenosylmethionine (SAM) as a methyl source. This is Bacteriochlorophyllide d C-20 methyltransferase from Chlorobaculum tepidum (strain ATCC 49652 / DSM 12025 / NBRC 103806 / TLS) (Chlorobium tepidum).